A 246-amino-acid chain; its full sequence is tRNA (guanine-N(7)-)-methyltransferase (246 aa).

Residues 1 to 23 are disordered; the sequence is MIESSSPTPPALHEGAPADVSHP. 4 residues coordinate S-adenosyl-L-methionine: glutamate 75, glutamate 100, aspartate 127, and aspartate 150. Aspartate 150 is an active-site residue. Substrate is bound at residue lysine 154. Residues 156-161 form an interaction with RNA region; the sequence is KHNKRR. Substrate contacts are provided by residues aspartate 186 and 225 to 228; that span reads TKFE.

It belongs to the class I-like SAM-binding methyltransferase superfamily. TrmB family.

It carries out the reaction guanosine(46) in tRNA + S-adenosyl-L-methionine = N(7)-methylguanosine(46) in tRNA + S-adenosyl-L-homocysteine. The protein operates within tRNA modification; N(7)-methylguanine-tRNA biosynthesis. In terms of biological role, catalyzes the formation of N(7)-methylguanine at position 46 (m7G46) in tRNA. This Polaromonas naphthalenivorans (strain CJ2) protein is tRNA (guanine-N(7)-)-methyltransferase.